Consider the following 515-residue polypeptide: MEESHGSLEIDGSTQQDLLYPLFFQEYIYAFVHDHGLNVNGSIIYEPMENLGYDKKSSSLSVKRLISRMHQQNHFLFSVNDSKQNRFVVHKNRSDFQMISQGFTVILEIPFSLQKVNILEEKKIEKFHNLRSIHAIFPFLEDKISHLIYVSDILIPYPVHLEILVQTLYCCIQDAPSLHFLRFFLQEYRNWNSFITPKRASSFFSKENQRLFLFLYNSHVYICESIFVFLHKQCSHHFRSTSFGAFLERTLFYGKIEHLVVVVVLRNDFQKSLGFYKDPFMHYVRYQGKSILAAKGTHFLMKKWKTHLMHFWQCNFHLWAQPDRIRINQFSKHSLDLMGYLSRLRLNRLVVRNQMLEHFFIIDIPIKKFDSIVPILPLIGSLAKAKFCNVSGHPISKPIRADSSDSDILDRFGRICRNLSHYHSGSSKKKSLYRVKYILRLSCARTLARKHKSTVRAFLKRLGSEFLEEFLTEEEQVLSLILSKTYLASHRSHKERIWYLDIIRINDLVNFEFKD.

It belongs to the intron maturase 2 family. MatK subfamily.

It is found in the plastid. It localises to the chloroplast. Usually encoded in the trnK tRNA gene intron. Probably assists in splicing its own and other chloroplast group II introns. The polypeptide is Maturase K (Ceratophyllum demersum (Rigid hornwort)).